A 212-amino-acid chain; its full sequence is Thiamine-phosphate synthase (212 aa).

Residues 35 to 39 (QLRRK) and N67 contribute to the 4-amino-2-methyl-5-(diphosphooxymethyl)pyrimidine site. Mg(2+) contacts are provided by D68 and D87. Position 106 (S106) interacts with 4-amino-2-methyl-5-(diphosphooxymethyl)pyrimidine. 132–134 (TGS) lines the 2-[(2R,5Z)-2-carboxy-4-methylthiazol-5(2H)-ylidene]ethyl phosphate pocket. K135 contacts 4-amino-2-methyl-5-(diphosphooxymethyl)pyrimidine. 2-[(2R,5Z)-2-carboxy-4-methylthiazol-5(2H)-ylidene]ethyl phosphate contacts are provided by residues G163 and 183 to 184 (IS).

The protein belongs to the thiamine-phosphate synthase family. It depends on Mg(2+) as a cofactor.

The catalysed reaction is 2-[(2R,5Z)-2-carboxy-4-methylthiazol-5(2H)-ylidene]ethyl phosphate + 4-amino-2-methyl-5-(diphosphooxymethyl)pyrimidine + 2 H(+) = thiamine phosphate + CO2 + diphosphate. It carries out the reaction 2-(2-carboxy-4-methylthiazol-5-yl)ethyl phosphate + 4-amino-2-methyl-5-(diphosphooxymethyl)pyrimidine + 2 H(+) = thiamine phosphate + CO2 + diphosphate. It catalyses the reaction 4-methyl-5-(2-phosphooxyethyl)-thiazole + 4-amino-2-methyl-5-(diphosphooxymethyl)pyrimidine + H(+) = thiamine phosphate + diphosphate. It functions in the pathway cofactor biosynthesis; thiamine diphosphate biosynthesis; thiamine phosphate from 4-amino-2-methyl-5-diphosphomethylpyrimidine and 4-methyl-5-(2-phosphoethyl)-thiazole: step 1/1. Functionally, condenses 4-methyl-5-(beta-hydroxyethyl)thiazole monophosphate (THZ-P) and 2-methyl-4-amino-5-hydroxymethyl pyrimidine pyrophosphate (HMP-PP) to form thiamine monophosphate (TMP). The chain is Thiamine-phosphate synthase from Chlorobium luteolum (strain DSM 273 / BCRC 81028 / 2530) (Pelodictyon luteolum).